A 383-amino-acid chain; its full sequence is Probable 2-succinylbenzoate--CoA ligase (383 aa).

It belongs to the ATP-dependent AMP-binding enzyme family. MenE subfamily.

The catalysed reaction is 2-succinylbenzoate + ATP + CoA = 2-succinylbenzoyl-CoA + AMP + diphosphate. It functions in the pathway quinol/quinone metabolism; 1,4-dihydroxy-2-naphthoate biosynthesis; 1,4-dihydroxy-2-naphthoate from chorismate: step 5/7. Its pathway is quinol/quinone metabolism; menaquinone biosynthesis. Converts 2-succinylbenzoate (OSB) to 2-succinylbenzoyl-CoA (OSB-CoA). May be involved in the biosynthesis of menaquinone. The protein is Probable 2-succinylbenzoate--CoA ligase (menE) of Mycobacterium tuberculosis (strain CDC 1551 / Oshkosh).